Consider the following 65-residue polypeptide: Large ribosomal subunit protein bL31 (65 aa).

Positions 16, 18, 36, and 39 each coordinate Zn(2+).

Belongs to the bacterial ribosomal protein bL31 family. Type A subfamily. In terms of assembly, part of the 50S ribosomal subunit. Zn(2+) is required as a cofactor.

Binds the 23S rRNA. In Carboxydothermus hydrogenoformans (strain ATCC BAA-161 / DSM 6008 / Z-2901), this protein is Large ribosomal subunit protein bL31.